The sequence spans 117 residues: Immunoglobulin lambda variable 10-54 (117 aa).

Positions 1–21 are cleaved as a signal peptide; sequence MPWALLLLTLLTHSAVSVVQA. The interval 20-43 is framework-1; sequence QAGLTQPPSVSKGLRQTATLTCTG. Positions 22–117 constitute an Ig-like domain; that stretch reads GLTQPPSVSK…CSALDSSLSA (96 aa). A disulfide bridge connects residues Cys-41 and Cys-108. The complementarity-determining-1 stretch occupies residues 44–52; the sequence is NSNIVGNQG. The segment at 53-69 is framework-2; the sequence is AAWLQQHQGHPPKLLSY. Positions 70 to 72 are complementarity-determining-2; sequence RNN. A framework-3 region spans residues 73–108; it reads NRPSGISERFSASRSGNTASLTITGLQPEDEADYYC. The segment at 109-117 is complementarity-determining-3; sequence SALDSSLSA.

In terms of assembly, immunoglobulins are composed of two identical heavy chains and two identical light chains; disulfide-linked.

It is found in the secreted. Its subcellular location is the cell membrane. Its function is as follows. V region of the variable domain of immunoglobulin light chains that participates in the antigen recognition. Immunoglobulins, also known as antibodies, are membrane-bound or secreted glycoproteins produced by B lymphocytes. In the recognition phase of humoral immunity, the membrane-bound immunoglobulins serve as receptors which, upon binding of a specific antigen, trigger the clonal expansion and differentiation of B lymphocytes into immunoglobulins-secreting plasma cells. Secreted immunoglobulins mediate the effector phase of humoral immunity, which results in the elimination of bound antigens. The antigen binding site is formed by the variable domain of one heavy chain, together with that of its associated light chain. Thus, each immunoglobulin has two antigen binding sites with remarkable affinity for a particular antigen. The variable domains are assembled by a process called V-(D)-J rearrangement and can then be subjected to somatic hypermutations which, after exposure to antigen and selection, allow affinity maturation for a particular antigen. This chain is Immunoglobulin lambda variable 10-54, found in Homo sapiens (Human).